Here is an 885-residue protein sequence, read N- to C-terminus: Alanine--tRNA ligase (885 aa).

The Zn(2+) site is built by His-571, His-575, Cys-674, and His-678.

This sequence belongs to the class-II aminoacyl-tRNA synthetase family. It depends on Zn(2+) as a cofactor.

It is found in the cytoplasm. The catalysed reaction is tRNA(Ala) + L-alanine + ATP = L-alanyl-tRNA(Ala) + AMP + diphosphate. Functionally, catalyzes the attachment of alanine to tRNA(Ala) in a two-step reaction: alanine is first activated by ATP to form Ala-AMP and then transferred to the acceptor end of tRNA(Ala). Also edits incorrectly charged Ser-tRNA(Ala) and Gly-tRNA(Ala) via its editing domain. The sequence is that of Alanine--tRNA ligase from Clavibacter sepedonicus (Clavibacter michiganensis subsp. sepedonicus).